A 342-amino-acid chain; its full sequence is Nucleoid-associated protein Shewmr7_2293 (342 aa).

Belongs to the YejK family.

The protein localises to the cytoplasm. The protein resides in the nucleoid. In Shewanella sp. (strain MR-7), this protein is Nucleoid-associated protein Shewmr7_2293.